The following is a 349-amino-acid chain: MSGATLEAYLASCTTHGDELSRDVAAVIQRLAKAALDIRKLVNQGALGTVFNGMHSGSNTDGDVQKDLDILCDDQFLSCLQGAPVACYASEELENPVLLDPAARLAVAIDPLDGSSNIDNNISIGTIFSVLPAAKGPDVDPSQSFLQPGNRQLAAGFFVYGPQTALVLSLGRGTEIFIFSSRLGCFVDAYKSVGIPDRANEFAINMSNYRHWEEAIRLYVDDCLAGSEGPRERDFNMRWIASLVAEAYRILVRGGIFLYPADSRKGYSHGRIRLVYEANPIAFIVENAGGSATTSVDRILDLVPESLHQRVPLVFGSRREVARITRYHVDPNMIGERAPLFGKRGLFRA.

Mg(2+) is bound by residues glutamate 91, aspartate 110, leucine 112, and aspartate 113. Substrate-binding positions include 113–116 (DGSS) and asparagine 205. Glutamate 277 serves as a coordination point for Mg(2+).

Belongs to the FBPase class 1 family. In terms of assembly, homotetramer. Mg(2+) serves as cofactor.

It is found in the cytoplasm. It catalyses the reaction beta-D-fructose 1,6-bisphosphate + H2O = beta-D-fructose 6-phosphate + phosphate. The protein operates within carbohydrate biosynthesis; gluconeogenesis. The polypeptide is Fructose-1,6-bisphosphatase class 1 (Sinorhizobium medicae (strain WSM419) (Ensifer medicae)).